A 30-amino-acid chain; its full sequence is Trypsin inhibitor 3 (30 aa).

Pyrrolidone carboxylic acid is present on Gln-1. 3 disulfide bridges follow: Cys-4–Cys-21, Cys-11–Cys-23, and Cys-17–Cys-29.

It localises to the secreted. Its function is as follows. Inhibits trypsin; probably participates in a plant defense mechanism. This is Trypsin inhibitor 3 from Momordica cochinchinensis (Spiny bitter cucumber).